The sequence spans 178 residues: Endoribonuclease YbeY (178 aa).

3 residues coordinate Zn(2+): H118, H122, and H128.

The protein belongs to the endoribonuclease YbeY family. Requires Zn(2+) as cofactor.

It is found in the cytoplasm. Its function is as follows. Single strand-specific metallo-endoribonuclease involved in late-stage 70S ribosome quality control and in maturation of the 3' terminus of the 16S rRNA. This Mycobacterium leprae (strain Br4923) protein is Endoribonuclease YbeY.